Here is a 193-residue protein sequence, read N- to C-terminus: Probable 3' cyclic ADP-D-ribose synthase ThsB' (193 aa).

In terms of assembly, homodimer.

The catalysed reaction is NAD(+) = 3'cADPR + nicotinamide + H(+). TIR-like domain-containing component of the Thoeris antiviral defense system, composed of ThsA and ThsB and ThsB'. In the presence of NAD(+) produces a signaling molecule that activates cognate ThsA (AC J8G6Z1) to hydrolyze NAD(+). The signaling molecule is a cyclic ADP-D-ribose isomer and may be 3' cyclic ADP-D-ribose (3'cADPR); it is not 2'cADPR. The protein is Probable 3' cyclic ADP-D-ribose synthase ThsB' of Bacillus cereus (strain MSX-D12).